A 389-amino-acid chain; its full sequence is GTPase Obg (389 aa).

The region spanning 1 to 159 (MKFVDEAVIK…RELRLELLLL (159 aa)) is the Obg domain. In terms of domain architecture, OBG-type G spans 160 to 333 (ADVGLLGMPN…LAEKLFDFIK (174 aa)). GTP contacts are provided by residues 166-173 (GMPNAGKS), 191-195 (FTTLV), 213-216 (DIPG), 283-286 (NKTD), and 314-316 (SAA). Positions 173 and 193 each coordinate Mg(2+).

Belongs to the TRAFAC class OBG-HflX-like GTPase superfamily. OBG GTPase family. As to quaternary structure, monomer. The cofactor is Mg(2+).

It is found in the cytoplasm. In terms of biological role, an essential GTPase which binds GTP, GDP and possibly (p)ppGpp with moderate affinity, with high nucleotide exchange rates and a fairly low GTP hydrolysis rate. Plays a role in control of the cell cycle, stress response, ribosome biogenesis and in those bacteria that undergo differentiation, in morphogenesis control. This is GTPase Obg from Shewanella amazonensis (strain ATCC BAA-1098 / SB2B).